The following is a 185-amino-acid chain: Large ribosomal subunit protein uL5 (185 aa).

Belongs to the universal ribosomal protein uL5 family. In terms of assembly, part of the 50S ribosomal subunit; part of the 5S rRNA/L5/L18/L25 subcomplex. Contacts the 5S rRNA and the P site tRNA. Forms a bridge to the 30S subunit in the 70S ribosome.

Its function is as follows. This is one of the proteins that bind and probably mediate the attachment of the 5S RNA into the large ribosomal subunit, where it forms part of the central protuberance. In the 70S ribosome it contacts protein S13 of the 30S subunit (bridge B1b), connecting the 2 subunits; this bridge is implicated in subunit movement. Contacts the P site tRNA; the 5S rRNA and some of its associated proteins might help stabilize positioning of ribosome-bound tRNAs. The chain is Large ribosomal subunit protein uL5 from Rhizobium johnstonii (strain DSM 114642 / LMG 32736 / 3841) (Rhizobium leguminosarum bv. viciae).